Here is a 1306-residue protein sequence, read N- to C-terminus: Kinesin-like protein KIN-14L (1306 aa).

The region spanning 142 to 456 (NVKVFCRSRP…LSFSARAKNA (315 aa)) is the Kinesin motor domain. Position 223–230 (223–230 (GQSRSGKT)) interacts with ATP. Coiled coils occupy residues 466–507 (IKKW…ANDQ) and 540–595 (HRIE…ALNS). Polar residues-rich tracts occupy residues 592 to 611 (ALNS…SVIS) and 660 to 677 (LGSS…TNAQ). Disordered regions lie at residues 592-627 (ALNS…SVTK), 657-710 (KSGL…SGAI), and 849-881 (KSHT…RTSL). Over residues 855-867 (SRSSSRGSSPGRS) the composition is skewed to low complexity.

It belongs to the TRAFAC class myosin-kinesin ATPase superfamily. Kinesin family. KIN-14 subfamily.

This Oryza sativa subsp. japonica (Rice) protein is Kinesin-like protein KIN-14L.